A 332-amino-acid polypeptide reads, in one-letter code: Glycerol-3-phosphate dehydrogenase [NAD(P)+] (332 aa).

NADPH-binding residues include serine 11, tryptophan 12, arginine 32, arginine 33, and lysine 106. Positions 106 and 136 each coordinate sn-glycerol 3-phosphate. Alanine 140 contacts NADPH. Sn-glycerol 3-phosphate contacts are provided by lysine 191, aspartate 244, serine 254, arginine 255, and asparagine 256. The Proton acceptor role is filled by lysine 191. Arginine 255 contacts NADPH. The NADPH site is built by valine 280 and glutamate 282.

The protein belongs to the NAD-dependent glycerol-3-phosphate dehydrogenase family.

The protein resides in the cytoplasm. The enzyme catalyses sn-glycerol 3-phosphate + NAD(+) = dihydroxyacetone phosphate + NADH + H(+). It carries out the reaction sn-glycerol 3-phosphate + NADP(+) = dihydroxyacetone phosphate + NADPH + H(+). The protein operates within membrane lipid metabolism; glycerophospholipid metabolism. In terms of biological role, catalyzes the reduction of the glycolytic intermediate dihydroxyacetone phosphate (DHAP) to sn-glycerol 3-phosphate (G3P), the key precursor for phospholipid synthesis. The sequence is that of Glycerol-3-phosphate dehydrogenase [NAD(P)+] from Corynebacterium aurimucosum (strain ATCC 700975 / DSM 44827 / CIP 107346 / CN-1) (Corynebacterium nigricans).